The primary structure comprises 242 residues: Phosphoribosylaminoimidazole-succinocarboxamide synthase (242 aa).

Belongs to the SAICAR synthetase family.

It carries out the reaction 5-amino-1-(5-phospho-D-ribosyl)imidazole-4-carboxylate + L-aspartate + ATP = (2S)-2-[5-amino-1-(5-phospho-beta-D-ribosyl)imidazole-4-carboxamido]succinate + ADP + phosphate + 2 H(+). The protein operates within purine metabolism; IMP biosynthesis via de novo pathway; 5-amino-1-(5-phospho-D-ribosyl)imidazole-4-carboxamide from 5-amino-1-(5-phospho-D-ribosyl)imidazole-4-carboxylate: step 1/2. This is Phosphoribosylaminoimidazole-succinocarboxamide synthase from Magnetococcus marinus (strain ATCC BAA-1437 / JCM 17883 / MC-1).